The following is a 427-amino-acid chain: Enolase 1 (427 aa).

(2R)-2-phosphoglycerate is bound at residue Q162. E204 serves as the catalytic Proton donor. Mg(2+)-binding residues include D241, E285, and D312. (2R)-2-phosphoglycerate contacts are provided by K337, R366, S367, and K388. The Proton acceptor role is filled by K337.

It belongs to the enolase family. It depends on Mg(2+) as a cofactor.

Its subcellular location is the cytoplasm. The protein localises to the secreted. It localises to the cell surface. It carries out the reaction (2R)-2-phosphoglycerate = phosphoenolpyruvate + H2O. It participates in carbohydrate degradation; glycolysis; pyruvate from D-glyceraldehyde 3-phosphate: step 4/5. In terms of biological role, catalyzes the reversible conversion of 2-phosphoglycerate (2-PG) into phosphoenolpyruvate (PEP). It is essential for the degradation of carbohydrates via glycolysis. The protein is Enolase 1 of Chlorobaculum tepidum (strain ATCC 49652 / DSM 12025 / NBRC 103806 / TLS) (Chlorobium tepidum).